The chain runs to 76 residues: Envelope small membrane protein (76 aa).

At 1-14 (MLQLVNDNGLVVNV) the chain is on the virion surface side. The helical transmembrane segment at 15–35 (ILWLFVLFFLLIISITFVQLV) threads the bilayer. At 36–76 (NLCFTCHRLCNSAVYTPIGRLYRVYKSYMRIDPLPSTVIDV) the chain is on the intravirion side.

It belongs to the alphacoronaviruses E protein family. Homopentamer. Interacts with membrane protein M in the budding compartment of the host cell, which is located between endoplasmic reticulum and the Golgi complex. Interacts with Nucleoprotein. Interacts with host IRF3; this interaction inhibits type I IFN production.

The protein resides in the host Golgi apparatus membrane. It localises to the host endoplasmic reticulum. Its function is as follows. Plays a central role in virus morphogenesis and assembly. Acts as a viroporin and self-assembles in host membranes forming pentameric protein-lipid pores that allow ion transport. Also plays a role in the induction of apoptosis. Counteracts the production of type I interferon by interacting with host IRF3 component and preventing its translocation to the host nucleus. This is Envelope small membrane protein from Sus scrofa (Pig).